The following is a 221-amino-acid chain: Oxaloacetate tautomerase FAHD1, mitochondrial (221 aa).

A mitochondrion-targeting transit peptide spans 1-24 (MAASRPLSRFWEWGKNIVCVGRNY). Arginine 22 provides a ligand contact to oxalate. At serine 37 the chain carries Phosphoserine. Mg(2+) is bound by residues glutamate 68, glutamate 70, and aspartate 99. Lysine 110 is subject to N6-acetyllysine. Lysine 112 is subject to N6-succinyllysine. Oxalate-binding residues include lysine 120 and threonine 189.

The protein belongs to the FAH family. In terms of assembly, homodimer. Mg(2+) serves as cofactor. Requires Mn(2+) as cofactor. Ubiquitous (at protein level).

The protein resides in the mitochondrion. The protein localises to the cytoplasm. Its subcellular location is the cytosol. The enzyme catalyses oxaloacetate = enol-oxaloacetate. It catalyses the reaction oxaloacetate + H(+) = pyruvate + CO2. The catalysed reaction is a 3-acylpyruvate + H2O = a carboxylate + pyruvate + H(+). It carries out the reaction acetylpyruvate + H2O = acetate + pyruvate + H(+). The enzyme catalyses 3-fumarylpyruvate + H2O = fumarate + pyruvate + H(+). Oxaloacetate decarboxylation is competitively inhibited by oxalate. Its function is as follows. Tautomerase that converts enol-oxaloacetate, a strong inhibitor of succinate dehydrogenase, to the physiological keto form of oxaloacetate. It is thereby required to maximize aerobic respiration efficiency by preventing succinate dehydrogenase inhibition. Also acts as a weak oxaloacetate decarboxylase (ODx), catalyzing the decarboxylation of oxaloacetate (OAA) to pyruvate and CO(2), and as such is likely a regulatory enzyme in the TCA cycle. Also displays acylpyruvase activity, being able to hydrolyze acetylpyruvate and fumarylpyruvate in vitro. Exhibits only a weak hydrolase activity on methylacetopyruvate and acetylacetone, and no activity toward acetoacetyl-CoA. This Homo sapiens (Human) protein is Oxaloacetate tautomerase FAHD1, mitochondrial.